Reading from the N-terminus, the 209-residue chain is Bacteriorhodopsin (209 aa).

Residues Leu1–Ala17 form a helical membrane-spanning segment. Residues Arg18–Tyr31 are Cytoplasmic-facing. Residues Ile32–Leu50 form a helical membrane-spanning segment. Residues Gly51 to Ile66 are Extracellular-facing. A helical membrane pass occupies residues Tyr67 to Asp84. Topologically, residues Leu85 to Thr95 are cytoplasmic. The chain crosses the membrane as a helical span at residues Ile96–Leu115. The Extracellular segment spans residues Ser116–Arg128. Residues Leu129 to Ser148 form a helical membrane-spanning segment. Over Ser149–Lys166 the chain is Cytoplasmic. Residues Thr167 to Val185 traverse the membrane as a helical segment. Residues Gly186–Ile197 are Extracellular-facing. Residues Glu198 to Ala209 form a helical membrane-spanning segment.

The protein belongs to the archaeal/bacterial/fungal opsin family.

Its subcellular location is the cell membrane. Functionally, light-driven proton pump. The protein is Bacteriorhodopsin (bop) of Halobacterium halobium (strain shark).